Consider the following 100-residue polypeptide: Urease subunit gamma (100 aa).

It belongs to the urease gamma subunit family. Heterotrimer of UreA (gamma), UreB (beta) and UreC (alpha) subunits. Three heterotrimers associate to form the active enzyme.

Its subcellular location is the cytoplasm. It carries out the reaction urea + 2 H2O + H(+) = hydrogencarbonate + 2 NH4(+). It functions in the pathway nitrogen metabolism; urea degradation; CO(2) and NH(3) from urea (urease route): step 1/1. This is Urease subunit gamma from Clostridium perfringens.